The following is a 341-amino-acid chain: HTH-type transcriptional repressor PurR (341 aa).

Residues 2 to 56 (ATIKDVAKHAGVSTTTVSHVINKTRFVAENTKAAVWAAIKELHYSPSAVARSLKV) enclose the HTH lacI-type domain. A DNA-binding region (H-T-H motif) is located at residues 4 to 23 (IKDVAKHAGVSTTTVSHVIN). Residues 48–56 (SAVARSLKV) mediate DNA binding. Residues Tyr73, Arg190, Thr192, and Asp275 each coordinate hypoxanthine.

As to quaternary structure, homodimer.

It participates in purine metabolism; purine nucleotide biosynthesis [regulation]. Functionally, is the main repressor of the genes involved in the de novo synthesis of purine nucleotides, regulating purB, purC, purEK, purF, purHD, purL, purMN and guaBA expression. PurR is allosterically activated to bind its cognate DNA by binding the purine corepressors, hypoxanthine or guanine, thereby effecting transcription repression. This chain is HTH-type transcriptional repressor PurR, found in Yersinia pestis bv. Antiqua (strain Antiqua).